A 285-amino-acid polypeptide reads, in one-letter code: Small ribosomal subunit protein uS2 (285 aa).

The tract at residues 229–285 is disordered; the sequence is AGLASGDAKPEAGAGEPLAEWEQELLAQANPNAEGSAEAAPAAATEEAPAAQTPADF. Over residues 257–285 the composition is skewed to low complexity; sequence ANPNAEGSAEAAPAAATEEAPAAQTPADF.

Belongs to the universal ribosomal protein uS2 family.

This chain is Small ribosomal subunit protein uS2, found in Nocardia farcinica (strain IFM 10152).